A 290-amino-acid chain; its full sequence is Acetylglutamate kinase (290 aa).

Substrate contacts are provided by residues 65 to 66, arginine 87, and asparagine 186; that span reads GG.

It belongs to the acetylglutamate kinase family. ArgB subfamily.

The protein resides in the cytoplasm. The enzyme catalyses N-acetyl-L-glutamate + ATP = N-acetyl-L-glutamyl 5-phosphate + ADP. It functions in the pathway amino-acid biosynthesis; L-arginine biosynthesis; N(2)-acetyl-L-ornithine from L-glutamate: step 2/4. Catalyzes the ATP-dependent phosphorylation of N-acetyl-L-glutamate. This is Acetylglutamate kinase from Mycolicibacterium gilvum (strain PYR-GCK) (Mycobacterium gilvum (strain PYR-GCK)).